Consider the following 418-residue polypeptide: Glutamate dehydrogenase (418 aa).

K105 is a catalytic residue. 217–223 provides a ligand contact to NAD(+); sequence GYGNVGY.

This sequence belongs to the Glu/Leu/Phe/Val dehydrogenases family. Homohexamer.

Its subcellular location is the cytoplasm. It carries out the reaction L-glutamate + NAD(+) + H2O = 2-oxoglutarate + NH4(+) + NADH + H(+). The catalysed reaction is L-glutamate + NADP(+) + H2O = 2-oxoglutarate + NH4(+) + NADPH + H(+). This is Glutamate dehydrogenase (gdhA) from Aeropyrum pernix (strain ATCC 700893 / DSM 11879 / JCM 9820 / NBRC 100138 / K1).